Here is a 571-residue protein sequence, read N- to C-terminus: MRVSKYLLSTQKETPANAEVISHQLMLRAGMIRRNASGLYSYLPTGLRVLRKVEAIVREEMNKAGAIEILMPMVQPADLWVETGRWDKFGPELLRFKDRHNRDFVLGPTHEEVITDLIRKEVSSYKQLPLNLYQIQTKFRDEVRPRFGMMRSREFLMKDAYSFHLDVDTMNETYEAMYTAYSNILSRMGLAFRPVLADTGSIGGSMSHEFHVLAQSGEDLIAYSTGSDYAANIEKAESPMPTEPRGAATEALRLVDTPNAKTIAELVEQFGLDITKTVKTLIVKGATEAAPLVALIVRGDHELNEVKADKLDLVASPLEMAPEALIRDAIGAGPGSLGPVGLNMPIIIDHSVSVMSDFAAGANVDDKHYFGINWERDLPLAQAADIRNVVEGEPTPDGLGTYAMARGIEVGHIFQLGTNYSKSMNATVLDENGKSQVLLMGCYGVGVSRIVAAAIEQNFDDRGIVWPEAIAPFSVGILPMNMHKSHRVTDIAEQLYKDLSAAGIEVLLDDRKERPGVMFADMELIGIPHTVVIGDRNIDAGVFEYKNRRTGEKQDIPFDQLVDFLKNAVKS.

This sequence belongs to the class-II aminoacyl-tRNA synthetase family. ProS type 1 subfamily. Homodimer.

Its subcellular location is the cytoplasm. It catalyses the reaction tRNA(Pro) + L-proline + ATP = L-prolyl-tRNA(Pro) + AMP + diphosphate. Its function is as follows. Catalyzes the attachment of proline to tRNA(Pro) in a two-step reaction: proline is first activated by ATP to form Pro-AMP and then transferred to the acceptor end of tRNA(Pro). As ProRS can inadvertently accommodate and process non-cognate amino acids such as alanine and cysteine, to avoid such errors it has two additional distinct editing activities against alanine. One activity is designated as 'pretransfer' editing and involves the tRNA(Pro)-independent hydrolysis of activated Ala-AMP. The other activity is designated 'posttransfer' editing and involves deacylation of mischarged Ala-tRNA(Pro). The misacylated Cys-tRNA(Pro) is not edited by ProRS. The polypeptide is Proline--tRNA ligase (Shewanella putrefaciens (strain CN-32 / ATCC BAA-453)).